Here is a 362-residue protein sequence, read N- to C-terminus: Acyl-CoA-binding domain-containing protein 3 (362 aa).

The N-terminal stretch at Met1 to Ala22 is a signal peptide. Disordered regions lie at residues Gln132–Asn151 and Val193–Glu214. Positions Arg192 to Asp221 form a coiled coil. In terms of domain architecture, ACB spans Leu231–Lys318. Residues Phe260–Lys264, Lys286, and Tyr305 each bind an acyl-CoA. Residues Met329 to Pro362 form a disordered region.

It belongs to the ACBP family. Expressed in roots, stems, leaves, flowers and siliques.

The protein resides in the secreted. Its subcellular location is the extracellular space. Functionally, binds medium- and long-chain acyl-CoA esters with very high affinity. Can interact in vitro with arachidonyl-CoA, barely with oleoyl-CoA, but not with palmitoyl-CoA. The chain is Acyl-CoA-binding domain-containing protein 3 (ACBP3) from Arabidopsis thaliana (Mouse-ear cress).